The following is a 509-amino-acid chain: Cytochrome P450 monooxygenase FUP2 (509 aa).

2 consecutive transmembrane segments (helical) span residues 16-36 (FGLA…YGCF) and 224-244 (MVEA…FGIA). Cys-450 is a binding site for heme.

Belongs to the cytochrome P450 family. Heme serves as cofactor.

The protein resides in the membrane. It functions in the pathway secondary metabolite biosynthesis. In terms of biological role, cytochrome P450 monooxygenase; part of the gene cluster that mediates the biosynthesis of the mycotoxin fusaproliferin (FUP) that belongs to the class of bicyclic sesterterpenoids. FUP2 introduces a hydroxyl group at the C-24 position resulting in the formation of preterpestacin IIa, which can be further oxidized. The oxidation of the hydroxyl group at C-24 to an aldehyde and further to a carboxylic group takes place via unspecific alcohol and aldehyde dehydrogenases and leads to the shunt products preterpestacin IIc and preterpestacin IIb, respectively. The FUP biosynthetic pathway starts with the enzyme encoded by FUP1 that combines a C-terminal prenyltransferase domain responsible for the synthesis of geranylgeranyl diphosphate with the N-terminal terpene cyclase domain, to yield preterpestacin I. Preterpestacin I is then decorated by oxygenation steps that are catalyzed by two cytochrome P450 monooxygenases. First, FUP2 introduces a hydroxyl group at the C-24 position resulting in the formation of preterpestacin IIa. The second P450 monooxygenase catalyzes the hydroxylation at C-16 and C-17 of preterpestacin IIa, producing preterpestacin III. Subsequently, the FAD-dependent oxidoreductase FUP4 catalyzes the oxidation of the hydroxy group at the C-16 position to a keto group, leading to the formation of (-)-terpestacin, which is the immediate precursor of FUP. The final step in the proposed biosynthetic pathway is the addition of an acetyl group at the C-24 position of terpestacin, which is catalyzed by the acetyltransferase FUP5. The protein is Cytochrome P450 monooxygenase FUP2 of Fusarium proliferatum (strain ET1) (Orchid endophyte fungus).